A 230-amino-acid chain; its full sequence is Ribonuclease 3 (230 aa).

An RNase III domain is found at 5–127; sequence HEHLARKLGI…ILGAVLRDQG (123 aa). Mg(2+) is bound at residue Glu40. The active site involves Asp44. Mg(2+) is bound by residues Asp113 and Glu116. Residue Glu116 is part of the active site. The DRBM domain occupies 154–224; sequence DPKTRLQELM…AENMLSRLSD (71 aa). Positions 202–230 are disordered; it reads GEGSSRKKAEQQAAENMLSRLSDQSRFRV.

It belongs to the ribonuclease III family. Homodimer. Mg(2+) is required as a cofactor.

The protein localises to the cytoplasm. The enzyme catalyses Endonucleolytic cleavage to 5'-phosphomonoester.. In terms of biological role, digests double-stranded RNA. Involved in the processing of primary rRNA transcript to yield the immediate precursors to the large and small rRNAs (23S and 16S). Processes some mRNAs, and tRNAs when they are encoded in the rRNA operon. Processes pre-crRNA and tracrRNA of type II CRISPR loci if present in the organism. The protein is Ribonuclease 3 of Methylococcus capsulatus (strain ATCC 33009 / NCIMB 11132 / Bath).